The sequence spans 276 residues: Diaminopimelate epimerase (276 aa).

The substrate site is built by Asn-13, Gln-46, and Asn-66. Residue Cys-75 is the Proton donor of the active site. Substrate is bound by residues 76 to 77 (GN), Asn-159, Asn-192, and 210 to 211 (ER). The active-site Proton acceptor is the Cys-219. Position 220-221 (220-221 (GT)) interacts with substrate.

The protein belongs to the diaminopimelate epimerase family. Homodimer.

The protein resides in the cytoplasm. The enzyme catalyses (2S,6S)-2,6-diaminopimelate = meso-2,6-diaminopimelate. It functions in the pathway amino-acid biosynthesis; L-lysine biosynthesis via DAP pathway; DL-2,6-diaminopimelate from LL-2,6-diaminopimelate: step 1/1. Its function is as follows. Catalyzes the stereoinversion of LL-2,6-diaminopimelate (L,L-DAP) to meso-diaminopimelate (meso-DAP), a precursor of L-lysine and an essential component of the bacterial peptidoglycan. The protein is Diaminopimelate epimerase of Cellvibrio japonicus (strain Ueda107) (Pseudomonas fluorescens subsp. cellulosa).